The sequence spans 323 residues: Porphobilinogen deaminase (323 aa).

Residue C251 is modified to S-(dipyrrolylmethanemethyl)cysteine.

The protein belongs to the HMBS family. In terms of assembly, monomer. Requires dipyrromethane as cofactor.

The enzyme catalyses 4 porphobilinogen + H2O = hydroxymethylbilane + 4 NH4(+). It participates in porphyrin-containing compound metabolism; protoporphyrin-IX biosynthesis; coproporphyrinogen-III from 5-aminolevulinate: step 2/4. It functions in the pathway porphyrin-containing compound metabolism; chlorophyll biosynthesis. In terms of biological role, tetrapolymerization of the monopyrrole PBG into the hydroxymethylbilane pre-uroporphyrinogen in several discrete steps. The sequence is that of Porphobilinogen deaminase (hemC) from Nostoc sp. (strain PCC 7120 / SAG 25.82 / UTEX 2576).